Here is a 144-residue protein sequence, read N- to C-terminus: Transcription antitermination protein NusB (144 aa).

Belongs to the NusB family.

Involved in transcription antitermination. Required for transcription of ribosomal RNA (rRNA) genes. Binds specifically to the boxA antiterminator sequence of the ribosomal RNA (rrn) operons. The polypeptide is Transcription antitermination protein NusB (Haemophilus influenzae (strain 86-028NP)).